A 387-amino-acid chain; its full sequence is Type 2 DNA topoisomerase 6 subunit A (387 aa).

A Topo IIA-type catalytic domain is found at 12–160; that stretch reads EARKKALAVF…MLILSKEKGK (149 aa). Tyr-106 functions as the O-(5'-phospho-DNA)-tyrosine intermediate in the catalytic mechanism. Mg(2+) is bound by residues Glu-207 and Asp-259.

Belongs to the TOP6A family. In terms of assembly, homodimer. Heterotetramer of two Top6A and two Top6B chains. The cofactor is Mg(2+).

It carries out the reaction ATP-dependent breakage, passage and rejoining of double-stranded DNA.. In terms of biological role, relaxes both positive and negative superturns and exhibits a strong decatenase activity. The sequence is that of Type 2 DNA topoisomerase 6 subunit A from Hyperthermus butylicus (strain DSM 5456 / JCM 9403 / PLM1-5).